The sequence spans 173 residues: Crossover junction endodeoxyribonuclease RuvC (173 aa).

Active-site residues include D8, E67, and D139. D8, E67, and D139 together coordinate Mg(2+).

It belongs to the RuvC family. Homodimer which binds Holliday junction (HJ) DNA. The HJ becomes 2-fold symmetrical on binding to RuvC with unstacked arms; it has a different conformation from HJ DNA in complex with RuvA. In the full resolvosome a probable DNA-RuvA(4)-RuvB(12)-RuvC(2) complex forms which resolves the HJ. It depends on Mg(2+) as a cofactor.

It is found in the cytoplasm. The catalysed reaction is Endonucleolytic cleavage at a junction such as a reciprocal single-stranded crossover between two homologous DNA duplexes (Holliday junction).. In terms of biological role, the RuvA-RuvB-RuvC complex processes Holliday junction (HJ) DNA during genetic recombination and DNA repair. Endonuclease that resolves HJ intermediates. Cleaves cruciform DNA by making single-stranded nicks across the HJ at symmetrical positions within the homologous arms, yielding a 5'-phosphate and a 3'-hydroxyl group; requires a central core of homology in the junction. The consensus cleavage sequence is 5'-(A/T)TT(C/G)-3'. Cleavage occurs on the 3'-side of the TT dinucleotide at the point of strand exchange. HJ branch migration catalyzed by RuvA-RuvB allows RuvC to scan DNA until it finds its consensus sequence, where it cleaves and resolves the cruciform DNA. This is Crossover junction endodeoxyribonuclease RuvC from Cronobacter sakazakii (strain ATCC BAA-894) (Enterobacter sakazakii).